Reading from the N-terminus, the 576-residue chain is MDGDRGKRDSYWSTSPSGSTTKLASGWERSSKVDTWLLILSFTQWALSIATVIICIIISARQGYSTKEYSMTVEALNMSSREVKESLTSLIRQEVIARAVNIQSSVQTGIPVLLNKNSRDVIQMIDKSCSRQELTQLCESTIAVHHAEGIAPLEPHSFWRCPVGEPYLSSDPKISLLLGPSLLSGSTTISGCVRLPSLSIGEAIYAYSSNLITQGCADIGKSYQVLQLGYISLNSDMFPDLNPVVSHTYDINDNRKSCSVVATGTRGYQLCSMPTVDERTDYSSDGIEDLVLDVLDLKGSTKSHRYRNSEVDLDHPFSALYPSVGNGIATEGSLIFLGYGGLTTPLQGDTKCRTQGCQQVSQDTCNEALKITWLGGKQVVNVIIRVNDYLSERPKIRVTTIPITQNYLGAEGRLLKLGDRVYIYTRSSGWHSQLQIGVLDVSHPLTINWTPHEALSRPGNKECNWYNTCPKECISGVYTDAYPLSPDAANVATVTLYANTSRVNPTIMYSNTTNIINMLRIKDVQLEVAYTTISSCITHFGKGYCFHIIEINQKSLNTLQPMLFKTSIPKLCKAES.

Residues 1–10 (MDGDRGKRDS) show a composition bias toward basic and acidic residues. The tract at residues 1–24 (MDGDRGKRDSYWSTSPSGSTTKLA) is disordered. Topologically, residues 1 to 37 (MDGDRGKRDSYWSTSPSGSTTKLASGWERSSKVDTWL) are intravirion. Residues 10 to 14 (SYWST) form an incorporation in virion region. Polar residues predominate over residues 11–23 (YWSTSPSGSTTKL). Residues 38-58 (LILSFTQWALSIATVIICIII) form a helical membrane-spanning segment. Residues 59-140 (SARQGYSTKE…RQELTQLCES (82 aa)) form an involved in interaction with F protein region. The Virion surface portion of the chain corresponds to 59-576 (SARQGYSTKE…SIPKLCKAES (518 aa)). N-linked (GlcNAc...) asparagine; by host glycosylation occurs at Asn77. 4 disulfides stabilise this stretch: Cys192-Cys216, Cys258-Cys271, Cys357-Cys469, and Cys463-Cys473. Residues 254 to 259 (NRKSCS) form an involved in neuraminidase activity region. N-linked (GlcNAc...) asparagine; by host glycans are attached at residues Asn499 and Asn511. A disulfide bridge connects residues Cys536 and Cys545.

It belongs to the paramyxoviruses hemagglutinin-neuraminidase family. As to quaternary structure, homotetramer; composed of disulfide-linked homodimers. Interacts with F protein trimer. In terms of processing, N-glycosylated; glycans consist of a mixture of high mannose-type oligosaccharides and of complex-type oligosaccharides.

The protein resides in the virion membrane. The protein localises to the host cell membrane. It carries out the reaction Hydrolysis of alpha-(2-&gt;3)-, alpha-(2-&gt;6)-, alpha-(2-&gt;8)- glycosidic linkages of terminal sialic acid residues in oligosaccharides, glycoproteins, glycolipids, colominic acid and synthetic substrates.. In terms of biological role, attaches the virus to sialic acid-containing cell receptors and thereby initiating infection. Binding of HN protein to the receptor induces a conformational change that allows the F protein to trigger virion/cell membranes fusion. Neuraminidase activity ensures the efficient spread of the virus by dissociating the mature virions from the neuraminic acid containing glycoproteins. The chain is Hemagglutinin-neuraminidase (HN) from Sendai virus (strain Harris) (SeV).